Consider the following 668-residue polypeptide: MEQNAEKRSIVGDDNSTVKRQDTSPSKGIAHIKPEYIVPLKQNENQKVAIYDEEMSSDRMTNEFAGGTNKKNKNGRGKKRGQNKNRDNRQVKEQNVLCPRLIHGDISKCSFGDNCRFVHDINLYLSTKKPEVESNIFPSCPVFNSLGFCPMGFKCRFLSSHLNKEDNILISKKEIDPDAQTIWSVKGEVNHISPERKLDLIKRRFPFTKSNEILEIIDSFQQECRDSMKPEEEVESTPQLKKQDPDVEQPVAPQVEQRNKELSEHRMKQREVYLKYKDTRYFAQEKKPLDLYHKKIVSPLTTVGNLPYRRLMRKLGADVTYSEMALAVPLIQGTNSEWALPKAHTSEFPGFGVQVACSKAWQAAKAAEALANSVSEISEINLNSGCPIDLLYRQGSGSALLDNPARMIRCLNAMNYVSKDIPITVKIRTGTKEGHPIAEGLVKRLVNETDVAAITLHGRSRQQRYTKSADWDYVSQVADTLRSAEADFIETEQGKEGRDSKNRIQFVGNGDVNNFEDWYRYLNGNENIDSVMVARGALIKPWIFEEVESQQYLDKTSTERLDILRDYAQFSMEHWGTDEYGISQCRRFFCEFMSFFHRYVPMGICERYPVKLNERPPNWCGRDELETLMGSTDVNDWIKLSDLFFGKTDENFVFVPKHKSSSYANRDS.

Positions 1-22 (MEQNAEKRSIVGDDNSTVKRQD) are enriched in basic and acidic residues. Disordered stretches follow at residues 1 to 31 (MEQN…GIAH) and 59 to 92 (RMTN…RQVK). The span at 70–83 (KKNKNGRGKKRGQN) shows a compositional bias: basic residues. 2 consecutive C3H1-type zinc fingers follow at residues 92–122 (KEQN…HDIN) and 134–164 (SNIF…HLNK). A disordered region spans residues 227–264 (SMKPEEEVESTPQLKKQDPDVEQPVAPQVEQRNKELSE). FMN is bound by residues 299–301 (PLT) and Gln354. The active-site Proton donor is the Cys386. Residues Lys426, His457, 509-511 (NGD), and 534-535 (AR) each bind FMN.

The protein belongs to the Dus family. Dus3 subfamily. FMN serves as cofactor.

The protein localises to the cytoplasm. It localises to the nucleus. The enzyme catalyses 5,6-dihydrouridine(47) in tRNA + NAD(+) = uridine(47) in tRNA + NADH + H(+). It catalyses the reaction 5,6-dihydrouridine(47) in tRNA + NADP(+) = uridine(47) in tRNA + NADPH + H(+). The catalysed reaction is a 5,6-dihydrouridine in mRNA + NAD(+) = a uridine in mRNA + NADH + H(+). It carries out the reaction a 5,6-dihydrouridine in mRNA + NADP(+) = a uridine in mRNA + NADPH + H(+). Its function is as follows. Catalyzes the synthesis of dihydrouridine, a modified base found in the D-loop of most tRNAs. Specifically modifies U47 in cytoplasmic tRNAs. Catalyzes the synthesis of dihydrouridine in some mRNAs, thereby affecting their translation. This is tRNA-dihydrouridine(47) synthase [NAD(P)(+)] (DUS3) from Saccharomyces cerevisiae (strain YJM789) (Baker's yeast).